Reading from the N-terminus, the 313-residue chain is Pseudouridine-5'-phosphate glycosidase (313 aa).

The active-site Proton donor is the Glu34. Substrate is bound by residues Lys95 and Val115. Asp147 provides a ligand contact to Mn(2+). 149-151 (SAD) provides a ligand contact to substrate. Catalysis depends on Lys168, which acts as the Nucleophile.

Belongs to the pseudouridine-5'-phosphate glycosidase family. In terms of assembly, homotrimer. Mn(2+) serves as cofactor.

It carries out the reaction D-ribose 5-phosphate + uracil = psi-UMP + H2O. Its function is as follows. Catalyzes the reversible cleavage of pseudouridine 5'-phosphate (PsiMP) to ribose 5-phosphate and uracil. Functions biologically in the cleavage direction, as part of a pseudouridine degradation pathway. This chain is Pseudouridine-5'-phosphate glycosidase, found in Deinococcus radiodurans (strain ATCC 13939 / DSM 20539 / JCM 16871 / CCUG 27074 / LMG 4051 / NBRC 15346 / NCIMB 9279 / VKM B-1422 / R1).